A 66-amino-acid polypeptide reads, in one-letter code: Clarkitoxin-1 (66 aa).

Disulfide bonds link C3-C24, C17-C42, C46-C59, and C60-C65.

In terms of tissue distribution, expressed by the venom gland.

It localises to the secreted. Not toxic to mice when injected intravenously or intraperitoneally. The polypeptide is Clarkitoxin-1 (Micrurus clarki (Clark's coral snake)).